A 503-amino-acid polypeptide reads, in one-letter code: Probable cytosol aminopeptidase (503 aa).

Lys-274 and Asp-279 together coordinate Mn(2+). Lys-286 is a catalytic residue. The Mn(2+) site is built by Asp-297, Asp-356, and Glu-358. Arg-360 is a catalytic residue.

Belongs to the peptidase M17 family. Mn(2+) is required as a cofactor.

The protein localises to the cytoplasm. It catalyses the reaction Release of an N-terminal amino acid, Xaa-|-Yaa-, in which Xaa is preferably Leu, but may be other amino acids including Pro although not Arg or Lys, and Yaa may be Pro. Amino acid amides and methyl esters are also readily hydrolyzed, but rates on arylamides are exceedingly low.. The catalysed reaction is Release of an N-terminal amino acid, preferentially leucine, but not glutamic or aspartic acids.. Functionally, presumably involved in the processing and regular turnover of intracellular proteins. Catalyzes the removal of unsubstituted N-terminal amino acids from various peptides. This is Probable cytosol aminopeptidase from Burkholderia cenocepacia (strain ATCC BAA-245 / DSM 16553 / LMG 16656 / NCTC 13227 / J2315 / CF5610) (Burkholderia cepacia (strain J2315)).